We begin with the raw amino-acid sequence, 534 residues long: Pentatricopeptide repeat-containing protein At5g59600 (534 aa).

PPR repeat units follow at residues 50-80, 81-115, 116-150, 151-181, 182-216, 217-251, 252-286, 287-321, 322-352, 353-387, 388-418, and 424-454; these read LTRIAAKLVTFYVECGKVLDARKVFDEMPKR, DISGCVVMIGACARNGYYQESLDFFREMYKDGLKL, DAFIVPSLLKASRNLLDREFGKMIHCLVLKFSYES, DAFIVSSLIDMYSKFGEVGNARKVFSDLGEQ, DLVVFNAMISGYANNSQADEALNLVKDMKLLGIKP, DVITWNALISGFSHMRNEEKVSEILELMCLDGYKP, DVVSWTSIISGLVHNFQNEKAFDAFKQMLTHGLYP, NSATIITLLPACTTLAYMKHGKEIHGYSVVTGLED, HGFVRSALLDMYGKCGFISEAMILFRKTPKK, TTVTFNSMIFCYANHGLADKAVELFDQMEATGEKL, DHLTFTAILTACSHAGLTDLGQNLFLLMQNK, and RLEHYACMVDLLGRAGKLVEAYEMIKAMRME. Residues 459–534 form a type E motif region; that stretch reads VWGALLAACR…FLGSSWVETV (76 aa).

It belongs to the PPR family. PCMP-E subfamily.

The protein is Pentatricopeptide repeat-containing protein At5g59600 (PCMP-E1) of Arabidopsis thaliana (Mouse-ear cress).